We begin with the raw amino-acid sequence, 264 residues long: uncharacterized protein (264 aa).

The N-terminal stretch at 1–22 is a signal peptide; sequence MGYLKKLALFISVIILGIFIIG. C23 carries the N-palmitoyl cysteine lipid modification. The S-diacylglycerol cysteine moiety is linked to residue C23.

The protein belongs to the staphylococcal tandem lipoprotein family.

The protein localises to the cell membrane. This is an uncharacterized protein from Staphylococcus aureus (strain N315).